A 117-amino-acid polypeptide reads, in one-letter code: MDKKTARLSRSKRTRIKLRELGHTRLCVYRTPRHVYAQVISGDGSTVLVAASTVEKDVKAKCKYTGNVESAAIVGEIIADRCKEKGISQVAFDRSGYKYHGRVKALVEAAREHGLQF.

This sequence belongs to the universal ribosomal protein uL18 family. As to quaternary structure, part of the 50S ribosomal subunit; part of the 5S rRNA/L5/L18/L25 subcomplex. Contacts the 5S and 23S rRNAs.

In terms of biological role, this is one of the proteins that bind and probably mediate the attachment of the 5S RNA into the large ribosomal subunit, where it forms part of the central protuberance. The sequence is that of Large ribosomal subunit protein uL18 from Francisella tularensis subsp. tularensis (strain FSC 198).